The chain runs to 340 residues: MIETDRIVGGQSLEEDMYVQPTVRPQIITDYIGQQAVREQLQLSINAAKMRQEHLDHVLLYGPPGLGKTTLSNIIAQEMGVTLRQTSGPVIEKPGDLAAILTRLEPHDVLFVDEIHRLSPIVEEVLYPAMEDFQIDIIIGEGPAAQSVKIDIPPFTLVGATTRAGLLTSPLRDRFGIVQRLEFYSIEELAQIVTRSANILGLSAEPDGALEIARRSRGTPRIANRLLRRVRDYAQVKGNGVITAEIADLALNLLEVDPLGLDKMDRRLLELLIQKFESRPVGIDSISAALGEERGTIEDVIEPFLVQQGFLIRTPRGRVVTQTAYRHLGLTMPERNLEDE.

The large ATPase domain (RuvB-L) stretch occupies residues 4–184; it reads TDRIVGGQSL…FGIVQRLEFY (181 aa). Residues R24, G65, K68, T69, T70, 131–133, R174, Y184, and R221 contribute to the ATP site; that span reads EDF. T69 contributes to the Mg(2+) binding site. Residues 185–255 form a small ATPAse domain (RuvB-S) region; that stretch reads SIEELAQIVT…IADLALNLLE (71 aa). The segment at 258 to 340 is head domain (RuvB-H); sequence PLGLDKMDRR…TMPERNLEDE (83 aa). DNA is bound by residues R294, R313, and R318.

The protein belongs to the RuvB family. As to quaternary structure, homohexamer. Forms an RuvA(8)-RuvB(12)-Holliday junction (HJ) complex. HJ DNA is sandwiched between 2 RuvA tetramers; dsDNA enters through RuvA and exits via RuvB. An RuvB hexamer assembles on each DNA strand where it exits the tetramer. Each RuvB hexamer is contacted by two RuvA subunits (via domain III) on 2 adjacent RuvB subunits; this complex drives branch migration. In the full resolvosome a probable DNA-RuvA(4)-RuvB(12)-RuvC(2) complex forms which resolves the HJ.

Its subcellular location is the cytoplasm. The catalysed reaction is ATP + H2O = ADP + phosphate + H(+). In terms of biological role, the RuvA-RuvB-RuvC complex processes Holliday junction (HJ) DNA during genetic recombination and DNA repair, while the RuvA-RuvB complex plays an important role in the rescue of blocked DNA replication forks via replication fork reversal (RFR). RuvA specifically binds to HJ cruciform DNA, conferring on it an open structure. The RuvB hexamer acts as an ATP-dependent pump, pulling dsDNA into and through the RuvAB complex. RuvB forms 2 homohexamers on either side of HJ DNA bound by 1 or 2 RuvA tetramers; 4 subunits per hexamer contact DNA at a time. Coordinated motions by a converter formed by DNA-disengaged RuvB subunits stimulates ATP hydrolysis and nucleotide exchange. Immobilization of the converter enables RuvB to convert the ATP-contained energy into a lever motion, pulling 2 nucleotides of DNA out of the RuvA tetramer per ATP hydrolyzed, thus driving DNA branch migration. The RuvB motors rotate together with the DNA substrate, which together with the progressing nucleotide cycle form the mechanistic basis for DNA recombination by continuous HJ branch migration. Branch migration allows RuvC to scan DNA until it finds its consensus sequence, where it cleaves and resolves cruciform DNA. This is Holliday junction branch migration complex subunit RuvB from Hydrogenovibrio crunogenus (strain DSM 25203 / XCL-2) (Thiomicrospira crunogena).